The primary structure comprises 350 residues: Renin receptor (350 aa).

The signal sequence occupies residues 1 to 16 (MAVFVVLLALVAGVLG). The Extracellular segment spans residues 17–302 (NEFSILKSPG…YNLAYKYNFE (286 aa)). A helical membrane pass occupies residues 303-323 (YSVVFNMVLWIMIALALAVII). Over 324-350 (TSYNIWNMDPGYDSIIYRMTNQKIRMD) the chain is Cytoplasmic. Residues 346–350 (KIRMD) carry the Mediates retrograde transport to the ER motif.

In terms of assembly, interacts with renin. Accessory component of the multisubunit proton-transporting vacuolar (V)-ATPase protein pump. Interacts (via N-terminus) with ATP6AP1 (via N-terminus). Interacts with ATP6V0D1; ATP6V0D1 is a V-ATPase complex subunit and the interaction promotes V-ATPase complex assembly. Interacts with TMEM9; TMEM9 is a V-ATPase assembly regulator and the interaction induces the interaction with ATP6V0D1. Interacts with VMA21 (via N-terminus); VMA21 is a V-ATPase accessory component. Phosphorylated. In terms of processing, proteolytically cleaved by a furin-like convertase in the trans-Golgi network to generate N- and C-terminal fragments. As to expression, expressed in brain, heart, placenta, liver, kidney and pancreas. Barely detectable in lung and skeletal muscles. In the kidney cortex it is restricted to the mesangium of glomeruli. In the coronary and kidney artery it is expressed in the subendothelium, associated to smooth muscles where it colocalizes with REN. Expressed in vascular structures and by syncytiotrophoblast cells in the mature fetal placenta.

It localises to the endoplasmic reticulum membrane. Its subcellular location is the lysosome membrane. The protein localises to the cytoplasmic vesicle. It is found in the autophagosome membrane. The protein resides in the cell projection. It localises to the dendritic spine membrane. Its subcellular location is the axon. The protein localises to the endosome membrane. It is found in the clathrin-coated vesicle membrane. The protein resides in the secretory vesicle. It localises to the synaptic vesicle membrane. Its function is as follows. Multifunctional protein which functions as a renin, prorenin cellular receptor and is involved in the assembly of the lysosomal proton-transporting V-type ATPase (V-ATPase) and the acidification of the endo-lysosomal system. May mediate renin-dependent cellular responses by activating ERK1 and ERK2. By increasing the catalytic efficiency of renin in AGT/angiotensinogen conversion to angiotensin I, may also play a role in the renin-angiotensin system (RAS). Through its function in V-type ATPase (v-ATPase) assembly and acidification of the lysosome it regulates protein degradation and may control different signaling pathways important for proper brain development, synapse morphology and synaptic transmission. The polypeptide is Renin receptor (Homo sapiens (Human)).